The primary structure comprises 32 residues: Tail virion protein G7P (32 aa).

A helical membrane pass occupies residues 9–29 (LYQLIFNAGLVICFGLGVISG).

Belongs to the inovirus G7P protein family.

Its subcellular location is the virion. It localises to the host membrane. Functionally, may initiate with G9P the virion concomitant assembly-budding process, by interacting with the packaging signal of the viral genome. The assembly-budding takes place at the host inner membrane. In turn, G7P and G9P are present at the end of the filamentous virion that emerges first from the bacterial host. This chain is Tail virion protein G7P (VII), found in Escherichia phage If1 (Bacteriophage If1).